A 128-amino-acid chain; its full sequence is Fluoride-specific ion channel FluC 1 (128 aa).

4 helical membrane-spanning segments follow: residues 10 to 30 (VAFF…AFSF), 32 to 52 (GTVI…YFFL), 59 to 79 (AWLT…FSSF), and 93 to 113 (FGAL…AWAG). Na(+)-binding residues include glycine 71 and threonine 74.

This sequence belongs to the fluoride channel Fluc/FEX (TC 1.A.43) family.

It localises to the cell membrane. It catalyses the reaction fluoride(in) = fluoride(out). Its activity is regulated as follows. Na(+) is not transported, but it plays an essential structural role and its presence is essential for fluoride channel function. Functionally, fluoride-specific ion channel. Important for reducing fluoride concentration in the cell, thus reducing its toxicity. The polypeptide is Fluoride-specific ion channel FluC 1 (Lactobacillus delbrueckii subsp. bulgaricus (strain ATCC 11842 / DSM 20081 / BCRC 10696 / JCM 1002 / NBRC 13953 / NCIMB 11778 / NCTC 12712 / WDCM 00102 / Lb 14)).